We begin with the raw amino-acid sequence, 573 residues long: ESX-1 secretion system protein EccA1 (573 aa).

334 to 341 (GPPGTGKT) contacts ATP.

This sequence belongs to the CbxX/CfxQ family. In terms of assembly, part of the ESX-1 / type VII secretion system (T7SS), which is composed of cytosolic and membrane components.

The protein localises to the cytoplasm. Part of the ESX-1 specialized secretion system, which delivers several virulence factors to host cells during infection, including the key virulence factors EsxA (ESAT-6) and EsxB (CFP-10). EccA1 exhibits ATPase activity and may provide energy for the export of ESX-1 substrates. The chain is ESX-1 secretion system protein EccA1 from Mycobacterium tuberculosis (strain CDC 1551 / Oshkosh).